The chain runs to 246 residues: Polyhedrin (246 aa).

The protein belongs to the polyhedrin family.

Functionally, major component of the virus occlusion bodies, which are large proteinaceous structures (polyhedra), that protect the virus from the outside environment for extended periods until they are ingested by insect larvae. The protein is Polyhedrin (PH) of Spodoptera exigua nuclear polyhedrosis virus (strain US) (SeMNPV).